The chain runs to 111 residues: MIGVILVLASLLSVGGQLCQKQATRPLTAGGRRRHLMLWLGLALICMGAAMVLWLLVLQTLPVGIAYPMLSLNFVWVTLAAWKIWHEQVPPRHWLGVALIISGIIILGSAA.

Helical transmembrane passes span 38-58 (LWLG…LLVL), 61-81 (LPVG…TLAA), and 91-111 (PRHW…GSAA). One can recognise an EamA domain in the interval 40–109 (LGLALICMGA…IISGIIILGS (70 aa)).

Belongs to the ArnE family. As to quaternary structure, heterodimer of ArnE and ArnF.

Its subcellular location is the cell inner membrane. The protein operates within bacterial outer membrane biogenesis; lipopolysaccharide biosynthesis. Translocates 4-amino-4-deoxy-L-arabinose-phosphoundecaprenol (alpha-L-Ara4N-phosphoundecaprenol) from the cytoplasmic to the periplasmic side of the inner membrane. In Salmonella newport (strain SL254), this protein is Probable 4-amino-4-deoxy-L-arabinose-phosphoundecaprenol flippase subunit ArnE.